Here is a 463-residue protein sequence, read N- to C-terminus: Chromosomal replication initiator protein DnaA (463 aa).

Positions 1–83 (MSLTLWQQCL…LRFEVGSKPV (83 aa)) are domain I, interacts with DnaA modulators. The tract at residues 83–126 (VAQAISQPVMVSAHASAPGVVSRPAPTRPSWDNVPALAELSYRS) is domain II. The interval 127–343 (NVNTKHNFDN…GALNRVIANA (217 aa)) is domain III, AAA+ region. Residues G171, G173, K174, and T175 each contribute to the ATP site. The interval 344 to 463 (NFTGRAITID…FSNLIRTLSS (120 aa)) is domain IV, binds dsDNA.

This sequence belongs to the DnaA family. Oligomerizes as a right-handed, spiral filament on DNA at oriC.

The protein localises to the cytoplasm. Plays an essential role in the initiation and regulation of chromosomal replication. ATP-DnaA binds to the origin of replication (oriC) to initiate formation of the DNA replication initiation complex once per cell cycle. Binds the DnaA box (a 9 base pair repeat at the origin) and separates the double-stranded (ds)DNA. Forms a right-handed helical filament on oriC DNA; dsDNA binds to the exterior of the filament while single-stranded (ss)DNA is stabiized in the filament's interior. The ATP-DnaA-oriC complex binds and stabilizes one strand of the AT-rich DNA unwinding element (DUE), permitting loading of DNA polymerase. After initiation quickly degrades to an ADP-DnaA complex that is not apt for DNA replication. Binds acidic phospholipids. The sequence is that of Chromosomal replication initiator protein DnaA from Erwinia tasmaniensis (strain DSM 17950 / CFBP 7177 / CIP 109463 / NCPPB 4357 / Et1/99).